Reading from the N-terminus, the 505-residue chain is Alpha-1-syntrophin (505 aa).

Disordered stretches follow at residues 1-24 (MASGRRAPRTGLLELRAGTGAGAG) and 40-75 (LTVSPADGEPGPEPGAVREPEPAQINGAAEPGAAPP). PH domains follow at residues 6 to 269 (RAPR…AQIN) and 293 to 401 (DIKQ…DGCH). Residues 9–18 (RTGLLELRAG) show a composition bias toward low complexity. A PDZ domain is found at 87–170 (RVTVRKADAG…EVVLEVKYMK (84 aa)). Phosphoserine occurs at positions 101, 184, 189, 193, and 200. Positions 183-212 (TSVGWDSPPASPLQRQPSSPGPQTRNLSEA) are disordered. A compositionally biased stretch (polar residues) spans 195–209 (LQRQPSSPGPQTRNL). The region spanning 449 to 505 (PFEKLQMSSDDGASLLFLDFGGAEGEIQLDLHSCPKTMVFIIHSFLSAKVTRLGLLA) is the SU domain. A calmodulin-binding region spans residues 483–505 (PKTMVFIIHSFLSAKVTRLGLLA).

It belongs to the syntrophin family. In terms of assembly, monomer and homodimer. Interacts with the dystrophin related protein DTNA; SGCG of the dystrophin glycoprotein complex; NOS1; GRB2; GA; TGFA; MAPK12 and the sodium channel proteins SCN4A and SCN5A. Interacts with the dystrophin protein DMD in a calmodulin dependent manner and with related protein UTRN; SGCA of the dystrophin glycoprotein complex; F-actin; calmodulin and with the other members of the syntrophin family SNTB1 and SNTB2. Interacts with MYOC; regulates muscle hypertrophy. Interacts with DTNB. In terms of processing, phosphorylated by CaM-kinase II. Phosphorylation may inhibit the interaction with DMD. As to expression, highly expressed in skeletal and cardiac muscle and is also detected in brain.

It is found in the cell membrane. It localises to the sarcolemma. The protein localises to the cell junction. Its subcellular location is the cytoplasm. The protein resides in the cytoskeleton. In terms of biological role, adapter protein that binds to and probably organizes the subcellular localization of a variety of membrane proteins. May link various receptors to the actin cytoskeleton and the extracellular matrix via dystrophin glycoprotein complex. Plays an important role in synapse formation and in the organization of UTRN and acetylcholine receptors at the neuromuscular synapse. Binds to phosphatidylinositol 4,5-bisphosphate. This is Alpha-1-syntrophin (SNTA1) from Oryctolagus cuniculus (Rabbit).